Here is a 439-residue protein sequence, read N- to C-terminus: Kelch domain-containing protein 10 (439 aa).

Positions 1–50 are disordered; it reads MSAAQGWDRNRRRGGGAAGGASGVSGAGAAGGGRGTGQLNRFVQLSGRPH. Residue arginine 13 is modified to Omega-N-methylarginine. Positions 15-36 are enriched in gly residues; it reads GGAAGGASGVSGAGAAGGGRGT. Kelch repeat units follow at residues 87–154, 155–198, 199–260, 261–319, 320–364, and 365–403; these read PARS…LASM, SLVL…SCRG, KRPS…RYRH, EIAH…HSCV, QIKN…VYFH, and CAAV…PSLL. The interval 398 to 439 is interaction with CUL2; that stretch reads VVPSLLELAWEKLLAAFPNLANLSRTQLLHLGLTQELIERLK.

This sequence belongs to the KLHDC10 family. As to quaternary structure, component of a CRL2 E3 ubiquitin-protein ligase complex, also named ECS (Elongin BC-CUL2/5-SOCS-box protein) complex, composed of CUL2, Elongin BC (ELOB and ELOC), RBX1 and substrate-specific adapter KLHDC10. Interacts (via the 6 Kelch repeats) with PPP5C.

Its subcellular location is the nucleus. It is found in the cytoplasm. It participates in protein modification; protein ubiquitination. In terms of biological role, substrate-recognition component of a Cul2-RING (CRL2) E3 ubiquitin-protein ligase complex of the DesCEND (destruction via C-end degrons) pathway, which recognizes a C-degron located at the extreme C-terminus of target proteins, leading to their ubiquitination and degradation. The C-degron recognized by the DesCEND pathway is usually a motif of less than ten residues and can be present in full-length proteins, truncated proteins or proteolytically cleaved forms. The CRL2(KLHDC10) complex specifically recognizes proteins with a proline-glycine (Pro-Gly) or an alanine tail (CAT tail) at the C-terminus, leading to their ubiquitination and degradation. The CRL2(KLHDC10) complex is involved in the ribosome-associated quality control (RQC) pathway, which mediates the extraction of incompletely synthesized nascent chains from stalled ribosomes: CRL2(KLHDC10) acts downstream of NEMF and recognizes CAT tails associated with stalled nascent chains, leading to their ubiquitination and degradation. Participates in the oxidative stress-induced cell death through MAP3K5 activation. Inhibits PPP5C phosphatase activity on MAP3K5. Acts as a regulator of necroptosis. This chain is Kelch domain-containing protein 10, found in Mus musculus (Mouse).